Reading from the N-terminus, the 226-residue chain is Ribonuclease 3 (226 aa).

Residues 6–128 enclose the RNase III domain; sequence IQKLQKILGY…LIGSIFLDSN (123 aa). Glutamate 41 is a binding site for Mg(2+). The active site involves aspartate 45. Residues asparagine 114 and glutamate 117 each contribute to the Mg(2+) site. Glutamate 117 is an active-site residue. The DRBM domain maps to 155–225; it reads DPKTRLQEYL…AQNALIKLGI (71 aa).

The protein belongs to the ribonuclease III family. Homodimer. Mg(2+) is required as a cofactor.

The protein resides in the cytoplasm. It carries out the reaction Endonucleolytic cleavage to 5'-phosphomonoester.. Its function is as follows. Digests double-stranded RNA. Involved in the processing of primary rRNA transcript to yield the immediate precursors to the large and small rRNAs (23S and 16S). Processes some mRNAs, and tRNAs when they are encoded in the rRNA operon. Processes pre-crRNA and tracrRNA of type II CRISPR loci if present in the organism. This is Ribonuclease 3 from Buchnera aphidicola subsp. Baizongia pistaciae (strain Bp).